Consider the following 284-residue polypeptide: Nucleotide-binding protein Teth39_0666 (284 aa).

8 to 15 is an ATP binding site; sequence GLSGAGKT. 58 to 61 contacts GTP; the sequence is DLRG.

The protein belongs to the RapZ-like family.

Its function is as follows. Displays ATPase and GTPase activities. This chain is Nucleotide-binding protein Teth39_0666, found in Thermoanaerobacter pseudethanolicus (strain ATCC 33223 / 39E) (Clostridium thermohydrosulfuricum).